Reading from the N-terminus, the 500-residue chain is NAD(P)H-quinone oxidoreductase chain 4, chloroplastic (500 aa).

Helical transmembrane passes span 3–23, 37–57, 87–107, 113–130, 134–154, 167–187, 208–228, 242–262, 272–292, 305–325, 330–350, 386–406, 416–436, and 462–482; these read FFPWLTIIVVLPISAGSLIFF, ICICLLELLLITYVFCYHFQL, IGPILLTGFITTLATLAAWPI, LFHFLMLAMYSGQIGSFS, LLLFFIMWELELIPVYLLLSM, FILYTAGGSIFLLMGVLGMGL, ALEIMFYFGFLIAYAVKSPII, HYSTCMLLAGILLKMGAYGLV, AHSIFSPWLMIVGTIQIIYAA, IAYSSVSHMGFTIIGIGSITD, GAVLQIISHGFIGAALFFLAG, LALPGMSGFVAELIVFFGIIT, ILITFVMAIGMILTPIYSLSM, and LFVSISIFLPVIGIGIYPDFV.

It belongs to the complex I subunit 4 family.

It localises to the plastid. It is found in the chloroplast thylakoid membrane. It catalyses the reaction a plastoquinone + NADH + (n+1) H(+)(in) = a plastoquinol + NAD(+) + n H(+)(out). The enzyme catalyses a plastoquinone + NADPH + (n+1) H(+)(in) = a plastoquinol + NADP(+) + n H(+)(out). In Platanus occidentalis (Sycamore), this protein is NAD(P)H-quinone oxidoreductase chain 4, chloroplastic.